The primary structure comprises 260 residues: Global transcriptional regulator CodY (260 aa).

The GAF domain stretch occupies residues 1–159 (MPNLLQKTRK…SSTVVGIQLL (159 aa)). Residues 207 to 226 (ASVIADRIGITRSVIVNALR) constitute a DNA-binding region (H-T-H motif).

It belongs to the CodY family.

It localises to the cytoplasm. Functionally, DNA-binding global transcriptional regulator which is involved in the adaptive response to starvation and acts by directly or indirectly controlling the expression of numerous genes in response to nutrient availability. During rapid exponential growth, CodY is highly active and represses genes whose products allow adaptation to nutrient depletion. The polypeptide is Global transcriptional regulator CodY (Streptococcus equi subsp. zooepidemicus (strain MGCS10565)).